A 316-amino-acid polypeptide reads, in one-letter code: ATP synthase gamma chain (316 aa).

This sequence belongs to the ATPase gamma chain family. As to quaternary structure, F-type ATPases have 2 components, CF(1) - the catalytic core - and CF(0) - the membrane proton channel. CF(1) has five subunits: alpha(3), beta(3), gamma(1), delta(1), epsilon(1). CF(0) has three main subunits: a, b and c.

The protein resides in the cellular thylakoid membrane. Its function is as follows. Produces ATP from ADP in the presence of a proton gradient across the membrane. The gamma chain is believed to be important in regulating ATPase activity and the flow of protons through the CF(0) complex. This is ATP synthase gamma chain from Prochlorococcus marinus (strain MIT 9312).